A 419-amino-acid chain; its full sequence is UDP-N-acetylmuramoylalanine--D-glutamate ligase (419 aa).

109–115 (GSTGKTT) lines the ATP pocket.

Belongs to the MurCDEF family.

Its subcellular location is the cytoplasm. The catalysed reaction is UDP-N-acetyl-alpha-D-muramoyl-L-alanine + D-glutamate + ATP = UDP-N-acetyl-alpha-D-muramoyl-L-alanyl-D-glutamate + ADP + phosphate + H(+). It participates in cell wall biogenesis; peptidoglycan biosynthesis. Its function is as follows. Cell wall formation. Catalyzes the addition of glutamate to the nucleotide precursor UDP-N-acetylmuramoyl-L-alanine (UMA). The sequence is that of UDP-N-acetylmuramoylalanine--D-glutamate ligase from Chlamydia felis (strain Fe/C-56) (Chlamydophila felis).